A 451-amino-acid polypeptide reads, in one-letter code: G-protein coupled receptor 61 (451 aa).

Low complexity predominate over residues 1-14 (MESSPIPQSSGNSS). Positions 1–31 (MESSPIPQSSGNSSTLGRVPQTPGPSTASGV) are disordered. At 1–44 (MESSPIPQSSGNSSTLGRVPQTPGPSTASGVPEVGLRDVASESV) the chain is on the extracellular side. The N-linked (GlcNAc...) asparagine glycan is linked to N12. Residues 45-67 (ALFFMLLLDLTAVAGNAAVMAVI) form a helical membrane-spanning segment. Topologically, residues 68-75 (AKTPALRK) are cytoplasmic. Residues 76–98 (FVFVFHLCLVDLLAALTLMPLAM) traverse the membrane as a helical segment. The Extracellular portion of the chain corresponds to 99-112 (LSSSALFDHALFGE). Residues 113-135 (VACRLYLFLSVCFVSLAILSVSA) form a helical membrane-spanning segment. Residues 136-155 (INVERYYYVVHPMRYEVRMT) lie on the Cytoplasmic side of the membrane. A helical transmembrane segment spans residues 156 to 178 (LGLVASVLVGVWVKALAMASVPV). Over 179–206 (LGRVSWEEGAPSVPPGCSLQWSHSAYCQ) the chain is Extracellular. A helical transmembrane segment spans residues 207 to 229 (LFVVVFAVLYFLLPLLLILVVYC). Over 230–287 (SMFRVARVAAMQHGPLPTWMETPRQRSESLSSRSTMVTSSGAPQTTPHRTFGGGKAAV) the chain is Cytoplasmic. The chain crosses the membrane as a helical span at residues 288-310 (VLLAVGGQFLLCWLPYFSFHLYV). Topologically, residues 311–324 (ALSAQPISTGQVES) are extracellular. The chain crosses the membrane as a helical span at residues 325-344 (VVTWIGYFCFTSNPFFYGCL). The Cytoplasmic segment spans residues 345 to 451 (NRQIRGELSK…RPAASPRLES (107 aa)).

It belongs to the G-protein coupled receptor 1 family. As to quaternary structure, forms heterodimer with MTNR1B. Interacts with ARRB1 and ARRB2 in a spontaneous and agonist-independent manner; leading to the internalization of GPR61 in the endosomal compartment. As to expression, expressed in brain; detected in frontal and temporal lobes, occipital pole, amygdala and hippocampus. Also expressed in testis and T cells, B cells, and monocyte. Low expression in many other tissues. Widely expressed in the hippocampus (at protein level).

The protein localises to the cell membrane. The protein resides in the endosome membrane. In terms of biological role, orphan G-protein coupled receptor. Constitutively activates the G(s)-alpha/cAMP signaling pathway. Shows a reciprocal regulatory interaction with the melatonin receptor MTNR1B most likely through receptor heteromerization. May be involved in the regulation of food intake and body weight. This Homo sapiens (Human) protein is G-protein coupled receptor 61 (GPR61).